A 69-amino-acid chain; its full sequence is Conotoxin AbVIF (69 aa).

A signal peptide spans 1-17 (VLIIAVLFLTACQLTTA). The propeptide occupies 18–40 (ETSSRGKQKHRALRSTDKNSRMS). A disordered region spans residues 20-41 (SSRGKQKHRALRSTDKNSRMSK). Intrachain disulfides connect Cys43-Cys57, Cys50-Cys61, and Cys56-Cys68.

This sequence belongs to the conotoxin O1 superfamily. As to expression, expressed by the venom duct.

Its subcellular location is the secreted. The polypeptide is Conotoxin AbVIF (Conus abbreviatus (Abbreviated cone)).